Here is a 293-residue protein sequence, read N- to C-terminus: Nitrogenase iron protein (293 aa).

10–17 provides a ligand contact to ATP; sequence GKGGIGKS. Cys98 provides a ligand contact to [4Fe-4S] cluster. Residue Arg101 is modified to ADP-ribosylarginine; by dinitrogenase reductase ADP-ribosyltransferase. [4Fe-4S] cluster is bound at residue Cys133.

The protein belongs to the NifH/BchL/ChlL family. Homodimer. [4Fe-4S] cluster serves as cofactor. In terms of processing, the reversible ADP-ribosylation of Arg-101 inactivates the nitrogenase reductase and regulates nitrogenase activity.

It catalyses the reaction N2 + 8 reduced [2Fe-2S]-[ferredoxin] + 16 ATP + 16 H2O = H2 + 8 oxidized [2Fe-2S]-[ferredoxin] + 2 NH4(+) + 16 ADP + 16 phosphate + 6 H(+). Its function is as follows. The key enzymatic reactions in nitrogen fixation are catalyzed by the nitrogenase complex, which has 2 components: the iron protein and the molybdenum-iron protein. The polypeptide is Nitrogenase iron protein (Stutzerimonas stutzeri (strain A1501) (Pseudomonas stutzeri)).